A 702-amino-acid chain; its full sequence is Methionine--tRNA ligase (702 aa).

Positions proline 14–histidine 24 match the 'HIGH' region motif. 4 residues coordinate Zn(2+): cysteine 146, cysteine 149, cysteine 159, and cysteine 162. Residues lysine 344–serine 348 carry the 'KMSKS' region motif. Residue lysine 347 participates in ATP binding. The region spanning aspartate 601 to glutamine 702 is the tRNA-binding domain.

It belongs to the class-I aminoacyl-tRNA synthetase family. MetG type 1 subfamily. In terms of assembly, homodimer. The cofactor is Zn(2+).

The protein resides in the cytoplasm. The catalysed reaction is tRNA(Met) + L-methionine + ATP = L-methionyl-tRNA(Met) + AMP + diphosphate. Its function is as follows. Is required not only for elongation of protein synthesis but also for the initiation of all mRNA translation through initiator tRNA(fMet) aminoacylation. This chain is Methionine--tRNA ligase, found in Chlorobium limicola (strain DSM 245 / NBRC 103803 / 6330).